The primary structure comprises 317 residues: 2,3-dihydroxyphenylpropionate/2,3-dihydroxicinnamic acid 1,2-dioxygenase 2 (317 aa).

The active-site Proton donor is His115. His179 functions as the Proton acceptor in the catalytic mechanism.

Belongs to the LigB/MhpB extradiol dioxygenase family. As to quaternary structure, homotetramer. Fe(2+) serves as cofactor.

The enzyme catalyses 3-(2,3-dihydroxyphenyl)propanoate + O2 = (2Z,4E)-2-hydroxy-6-oxonona-2,4-dienedioate + H(+). It carries out the reaction (2E)-3-(2,3-dihydroxyphenyl)prop-2-enoate + O2 = (2Z,4E,7E)-2-hydroxy-6-oxonona-2,4,7-trienedioate + H(+). It participates in aromatic compound metabolism; 3-phenylpropanoate degradation. In terms of biological role, catalyzes the non-heme iron(II)-dependent oxidative cleavage of 2,3-dihydroxyphenylpropionic acid and 2,3-dihydroxicinnamic acid into 2-hydroxy-6-ketononadienedioate and 2-hydroxy-6-ketononatrienedioate, respectively. The polypeptide is 2,3-dihydroxyphenylpropionate/2,3-dihydroxicinnamic acid 1,2-dioxygenase 2 (Dechloromonas aromatica (strain RCB)).